An 85-amino-acid chain; its full sequence is Small ribosomal subunit protein uS17 (85 aa).

This sequence belongs to the universal ribosomal protein uS17 family. As to quaternary structure, part of the 30S ribosomal subunit.

Functionally, one of the primary rRNA binding proteins, it binds specifically to the 5'-end of 16S ribosomal RNA. The sequence is that of Small ribosomal subunit protein uS17 from Acinetobacter baumannii (strain AB307-0294).